A 416-amino-acid chain; its full sequence is CinA-like protein (416 aa).

It belongs to the CinA family.

This chain is CinA-like protein, found in Solibacter usitatus (strain Ellin6076).